Reading from the N-terminus, the 309-residue chain is MAVSVQDLLDKIHFHVIYSTETALQKEITTSEIMRPGLEMAGYFDYFTPERIQLFGMKEWSYMMTVVGDNRYDLLKKVMAKETPVVIVARNLEIPSEMVAAAKKSDIVLLQSREATSRLNSVLTSFLDERLAERTTVHGVLMDIFGVGVLIQGASGIGKSETGLELVKRGHRLVADDRVDVFQRDAFTLSGEPAEILRNMIEIRGVGIIDVMSLFGAGAVKDSTDIDMAIYLEYYDKEKAFDRLGNAPTIVEFSDVEVPQTRIPVKTGRNVSVIVEAAVMNFRAKQMGFDATKTFEDRLTDLISHNKES.

Catalysis depends on residues H138 and K159. Position 153-160 (153-160 (GASGIGKS)) interacts with ATP. Residue S160 participates in Mg(2+) binding. D177 serves as the catalytic Proton acceptor; for phosphorylation activity. Proton donor; for dephosphorylation activity. Residues 201-210 (IEIRGVGIID) are important for the catalytic mechanism of both phosphorylation and dephosphorylation. E202 lines the Mg(2+) pocket. The active site involves R243. Residues 264-269 (PVKTGR) are important for the catalytic mechanism of dephosphorylation.

This sequence belongs to the HPrK/P family. Homohexamer. Mg(2+) serves as cofactor.

It carries out the reaction [HPr protein]-L-serine + ATP = [HPr protein]-O-phospho-L-serine + ADP + H(+). It catalyses the reaction [HPr protein]-O-phospho-L-serine + phosphate + H(+) = [HPr protein]-L-serine + diphosphate. Its function is as follows. Catalyzes the ATP- as well as the pyrophosphate-dependent phosphorylation of a specific serine residue in HPr, a phosphocarrier protein of the phosphoenolpyruvate-dependent sugar phosphotransferase system (PTS). HprK/P also catalyzes the pyrophosphate-producing, inorganic phosphate-dependent dephosphorylation (phosphorolysis) of seryl-phosphorylated HPr (P-Ser-HPr). The two antagonistic activities of HprK/P are regulated by several intracellular metabolites, which change their concentration in response to the absence or presence of rapidly metabolisable carbon sources (glucose, fructose, etc.) in the growth medium. Therefore, by controlling the phosphorylation state of HPr, HPrK/P is a sensor enzyme that plays a major role in the regulation of carbon metabolism and sugar transport: it mediates carbon catabolite repression (CCR), and regulates PTS-catalyzed carbohydrate uptake and inducer exclusion. The protein is HPr kinase/phosphorylase of Lactococcus lactis subsp. lactis (strain IL1403) (Streptococcus lactis).